Consider the following 309-residue polypeptide: Polyprenal reductase (309 aa).

Transmembrane regions (helical) follow at residues 12 to 32 (LPLY…FTLI), 72 to 92 (FYAI…SLIY), 114 to 134 (IPPI…LHVA), 151 to 171 (MNLF…ISIM), 184 to 204 (LHVS…LFWI), 242 to 262 (LVSC…FLVI), and 270 to 290 (FIIM…HSWY).

It belongs to the steroid 5-alpha reductase family. Polyprenal reductase subfamily.

Its subcellular location is the endoplasmic reticulum membrane. The enzyme catalyses a di-trans,poly-cis-dolichal + NADP(+) = a di-trans,poly-cis-polyprenal + NADPH + H(+). It participates in protein modification; protein glycosylation. Its function is as follows. Plays a key role in early steps of protein N-linked glycosylation by being involved in the conversion of polyprenol into dolichol. Acts as a polyprenal reductase that mediates the reduction of polyprenal into dolichal in a NADP-dependent mechanism. Dolichols are required for the synthesis of dolichol-linked monosaccharides and the oligosaccharide precursor used for N-glycosylation. In Caenorhabditis elegans, this protein is Polyprenal reductase.